The sequence spans 904 residues: UPF0182 protein CKL_0015 (904 aa).

7 consecutive transmembrane segments (helical) span residues 9-29 (SLIVILFVCILFLNKIVDFII), 47-67 (LIAICKLMIPLFIIIYISIVL), 96-116 (IFIIVNLIVSFLFSYAFAATY), 157-177 (ILSLIIFLGLITLVTYFTLSV), 208-228 (LAVLAALVMICVSIGYILKCI), 253-273 (YKIIAAASIISAVIIFISILV), and 279-299 (IIVSITVIVALILIKSLSYTV).

This sequence belongs to the UPF0182 family.

The protein localises to the cell membrane. This Clostridium kluyveri (strain ATCC 8527 / DSM 555 / NBRC 12016 / NCIMB 10680 / K1) protein is UPF0182 protein CKL_0015.